Here is a 714-residue protein sequence, read N- to C-terminus: Developmentally-regulated protein kinase 1 (714 aa).

2 disordered regions span residues 88–122 (NNNISNNNNNNNNNNNNNNNNNNNNNNINNNNNFN) and 174–266 (CNMI…IINN). Low complexity-rich tracts occupy residues 174–200 (CNMINNDNNNNNNNNNNNNNNNNNNNN), 209–227 (PSSNSTPSHSSPSSPTTSS), and 240–266 (NFNQQLQNNNNSNNNSNNNNNNNIINN). A Protein kinase domain is found at 334-589 (FNFYGSLGSG…SCSIRNHKWF (256 aa)). ATP contacts are provided by residues 340-348 (LGSGSFGTA) and K363. D457 serves as the catalytic Proton acceptor. A Phosphothreonine modification is found at T488.

This sequence belongs to the protein kinase superfamily. AGC Ser/Thr protein kinase family.

It carries out the reaction L-seryl-[protein] + ATP = O-phospho-L-seryl-[protein] + ADP + H(+). The catalysed reaction is L-threonyl-[protein] + ATP = O-phospho-L-threonyl-[protein] + ADP + H(+). The protein is Developmentally-regulated protein kinase 1 (pkaD) of Dictyostelium discoideum (Social amoeba).